The sequence spans 93 residues: MISIDLTLKYSPMPVSVQRKEKDGAEALYQTIVTAMQGDRPQVLELTCEKQTEKKVAIMSDQISAVIVSEKDGAASAGKVPGFAALGQIVNQG.

This sequence belongs to the UPF0367 family.

In Synechocystis sp. (strain ATCC 27184 / PCC 6803 / Kazusa), this protein is UPF0367 protein ssl1972.